Consider the following 598-residue polypeptide: Sulfoacetaldehyde acetyltransferase (598 aa).

The protein belongs to the TPP enzyme family. Homotetramer. Mg(2+) is required as a cofactor. It depends on thiamine diphosphate as a cofactor.

Its subcellular location is the cytoplasm. The catalysed reaction is acetyl phosphate + sulfite + H(+) = sulfoacetaldehyde + phosphate. It participates in organosulfur degradation; taurine degradation via aerobic pathway; acetyl phosphate and sulfite from taurine: step 2/2. The sequence is that of Sulfoacetaldehyde acetyltransferase from Castellaniella defragrans (Alcaligenes defragrans).